The primary structure comprises 158 residues: 2-C-methyl-D-erythritol 2,4-cyclodiphosphate synthase (158 aa).

2 residues coordinate a divalent metal cation: Asp-9 and His-11. 4-CDP-2-C-methyl-D-erythritol 2-phosphate is bound by residues 9-11 and 35-36; these read DVH and HS. Position 43 (His-43) interacts with a divalent metal cation. 4-CDP-2-C-methyl-D-erythritol 2-phosphate-binding positions include 57–59 and Arg-143; that span reads DIG.

Belongs to the IspF family. In terms of assembly, homotrimer. Requires a divalent metal cation as cofactor.

The enzyme catalyses 4-CDP-2-C-methyl-D-erythritol 2-phosphate = 2-C-methyl-D-erythritol 2,4-cyclic diphosphate + CMP. It participates in isoprenoid biosynthesis; isopentenyl diphosphate biosynthesis via DXP pathway; isopentenyl diphosphate from 1-deoxy-D-xylulose 5-phosphate: step 4/6. Its function is as follows. Involved in the biosynthesis of isopentenyl diphosphate (IPP) and dimethylallyl diphosphate (DMAPP), two major building blocks of isoprenoid compounds. Catalyzes the conversion of 4-diphosphocytidyl-2-C-methyl-D-erythritol 2-phosphate (CDP-ME2P) to 2-C-methyl-D-erythritol 2,4-cyclodiphosphate (ME-CPP) with a corresponding release of cytidine 5-monophosphate (CMP). In Chromobacterium violaceum (strain ATCC 12472 / DSM 30191 / JCM 1249 / CCUG 213 / NBRC 12614 / NCIMB 9131 / NCTC 9757 / MK), this protein is 2-C-methyl-D-erythritol 2,4-cyclodiphosphate synthase.